The sequence spans 122 residues: Large ribosomal subunit protein uL24 (122 aa).

The protein belongs to the universal ribosomal protein uL24 family. In terms of assembly, part of the 50S ribosomal subunit.

In terms of biological role, one of two assembly initiator proteins, it binds directly to the 5'-end of the 23S rRNA, where it nucleates assembly of the 50S subunit. One of the proteins that surrounds the polypeptide exit tunnel on the outside of the subunit. This chain is Large ribosomal subunit protein uL24, found in Renibacterium salmoninarum (strain ATCC 33209 / DSM 20767 / JCM 11484 / NBRC 15589 / NCIMB 2235).